Here is a 1374-residue protein sequence, read N- to C-terminus: Y' element ATP-dependent helicase YLL067C (1374 aa).

Residues 321-345 (AGEAASSDHDQKISRVTRKRPREPK) are disordered. The Helicase ATP-binding domain occupies 375–552 (EIYMADTPSV…LQRIGLTGLA (178 aa)). ATP is bound at residue 388–395 (APPGYGKT). Residues 498-501 (DEFH) carry the DEAH box motif. The 150-residue stretch at 609–758 (KLLLALFEIE…EFYGLESKKG (150 aa)) folds into the Helicase C-terminal domain. The span at 832-1011 (ANASTNATTN…ATTTESTNAS (180 aa)) shows a compositional bias: low complexity. The interval 832-1035 (ANASTNATTN…RFHPVTDINK (204 aa)) is disordered. Basic and acidic residues predominate over residues 1012-1035 (AKEDANKDGNAEDNRFHPVTDINK).

This sequence belongs to the helicase family. Yeast subtelomeric Y' repeat subfamily.

Functionally, catalyzes DNA unwinding and is involved in telomerase-independent telomere maintenance. In Saccharomyces cerevisiae (strain ATCC 204508 / S288c) (Baker's yeast), this protein is Y' element ATP-dependent helicase YLL067C.